The following is a 228-amino-acid chain: MMYHIPGVLSPQDVARFREQLEQAEWVDGRVTTGAQGAQVKNNQQVDTRSTLYAALQNEVLNAVNQHALFFAAALPRTLSTPLFNRYQNNETYGFHVDGAVRSHPQNGWMRTDLSATLFLSDPQSYDGGELVVNDTFGQHRVKLPAGDLVLYPSSSLHCVTPVTRGVRVASFIWIQSMIRDDKKRAMLFELDKNIQNIQSLKSRYGENEEILSLLNLYHNLLREWSEI.

One can recognise a Fe2OG dioxygenase domain in the interval 78-177 (TLSTPLFNRY…RVASFIWIQS (100 aa)). Residues His-96, Asp-98, and His-158 each contribute to the Fe cation site. Residue Arg-168 participates in 2-oxoglutarate binding.

The cofactor is Fe(2+). L-ascorbate is required as a cofactor.

The sequence is that of PKHD-type hydroxylase YbiX from Escherichia coli O157:H7.